A 145-amino-acid chain; its full sequence is Protein H2A.5 (145 aa).

The interval 118–145 (SPAAAEKEAKSQKAAAKSPKKKTAATKE) is disordered. The SPKK motif motif lies at 135–138 (SPKK). The segment covering 135 to 145 (SPKKKTAATKE) has biased composition (basic residues).

This sequence belongs to the histone H2A family. As to quaternary structure, the nucleosome is a histone octamer containing two molecules each of H2A, H2B, H3 and H4 assembled in one H3-H4 heterotetramer and two H2A-H2B heterodimers. The octamer wraps approximately 147 bp of DNA. As to expression, abundant in meristematic tissues.

The protein resides in the nucleus. Its subcellular location is the chromosome. Core component of nucleosome. Nucleosomes wrap and compact DNA into chromatin, limiting DNA accessibility to the cellular machineries which require DNA as a template. Histones thereby play a central role in transcription regulation, DNA repair, DNA replication and chromosomal stability. DNA accessibility is regulated via a complex set of post-translational modifications of histones, also called histone code, and nucleosome remodeling. The polypeptide is Protein H2A.5 (H2A-2) (Triticum aestivum (Wheat)).